The sequence spans 85 residues: ATP synthase subunit c (85 aa).

Transmembrane regions (helical) follow at residues 10–30 (IAVA…FGLL) and 53–73 (FIVA…ALFF).

The protein belongs to the ATPase C chain family. In terms of assembly, F-type ATPases have 2 components, F(1) - the catalytic core - and F(0) - the membrane proton channel. F(1) has five subunits: alpha(3), beta(3), gamma(1), delta(1), epsilon(1). F(0) has three main subunits: a(1), b(2) and c(10-14). The alpha and beta chains form an alternating ring which encloses part of the gamma chain. F(1) is attached to F(0) by a central stalk formed by the gamma and epsilon chains, while a peripheral stalk is formed by the delta and b chains.

Its subcellular location is the cell inner membrane. Functionally, f(1)F(0) ATP synthase produces ATP from ADP in the presence of a proton or sodium gradient. F-type ATPases consist of two structural domains, F(1) containing the extramembraneous catalytic core and F(0) containing the membrane proton channel, linked together by a central stalk and a peripheral stalk. During catalysis, ATP synthesis in the catalytic domain of F(1) is coupled via a rotary mechanism of the central stalk subunits to proton translocation. In terms of biological role, key component of the F(0) channel; it plays a direct role in translocation across the membrane. A homomeric c-ring of between 10-14 subunits forms the central stalk rotor element with the F(1) delta and epsilon subunits. The protein is ATP synthase subunit c of Pseudomonas syringae pv. syringae (strain B728a).